We begin with the raw amino-acid sequence, 445 residues long: MKHFEANFDGLVGPTHNYAGLSFGNVASLNNAAATSSPKDAAKQGIKKAKALADLGLVQGMFAPQERPDLHTLRRIGFTGSDAEVLNKAAKEAPALLRACCSASSMWTANAATVSPSADTHDGKLHFTPANLVDKLHRSIEPVTTGNILQATFNDSRYFKHHQHLPEHTSFGDEGAANHTRLCSEYGHAGIELFVYGQEATNPSAPKPQKFPARQTLEASQAIARLHQLDDDNTVYMQQNPDVIDQGVFHNDVIAVGNQNVLFYHEQAFLNTQAKLEEIKRKFGESPLHFVEVPTAKVAIQDAVKSYLFNTQVVTLPSGEMAIIAPTNCQENPAVHAYLNELVTLGSPIKQVHYFDVKQSMQNGGGPACLRLRVAMNQDEVAAVNQNTMMNDALFARLNQWVDKHYRDRLSVADLADPQLVIESRTALDELTQIMKLGSVYQFQR.

Substrate contacts are provided by residues 19–28, N110, and 137–138; these read AGLSFGNVAS and HR. E174 is a catalytic residue. Substrate is bound at residue R214. H250 is a catalytic residue. Residues D252 and N363 each contribute to the substrate site. C369 serves as the catalytic Nucleophile.

It belongs to the succinylarginine dihydrolase family. In terms of assembly, homodimer.

The enzyme catalyses N(2)-succinyl-L-arginine + 2 H2O + 2 H(+) = N(2)-succinyl-L-ornithine + 2 NH4(+) + CO2. The protein operates within amino-acid degradation; L-arginine degradation via AST pathway; L-glutamate and succinate from L-arginine: step 2/5. In terms of biological role, catalyzes the hydrolysis of N(2)-succinylarginine into N(2)-succinylornithine, ammonia and CO(2). The protein is N-succinylarginine dihydrolase of Shewanella piezotolerans (strain WP3 / JCM 13877).